Reading from the N-terminus, the 125-residue chain is MARLAGVDIPNEKRIEIALTYIFGVGRTRAKETLAATGISPDIRVKDLTDEQLITLRDYLEANYKIEGDLRREIDADIRRKIQINCYQGQRHRKGLPVRGQRTKTNARTRKGPKRTVAGKKKATK.

The segment at 90 to 125 (QRHRKGLPVRGQRTKTNARTRKGPKRTVAGKKKATK) is disordered.

The protein belongs to the universal ribosomal protein uS13 family. In terms of assembly, part of the 30S ribosomal subunit. Forms a loose heterodimer with protein S19. Forms two bridges to the 50S subunit in the 70S ribosome.

Located at the top of the head of the 30S subunit, it contacts several helices of the 16S rRNA. In the 70S ribosome it contacts the 23S rRNA (bridge B1a) and protein L5 of the 50S subunit (bridge B1b), connecting the 2 subunits; these bridges are implicated in subunit movement. Contacts the tRNAs in the A and P-sites. This Bifidobacterium longum subsp. infantis (strain ATCC 15697 / DSM 20088 / JCM 1222 / NCTC 11817 / S12) protein is Small ribosomal subunit protein uS13.